We begin with the raw amino-acid sequence, 293 residues long: Cell adhesion molecule CEACAM21 (293 aa).

An N-terminal signal peptide occupies residues 1-34 (MGPPSACPHRECIPWQGLLLTASLLTFWNAPTTA). The Extracellular portion of the chain corresponds to 35-240 (WLFIASAPFE…TVKSDDNTLG (206 aa)). A glycan (N-linked (GlcNAc...) asparagine) is linked at N111. Positions 147 to 231 (PSIQASSTTV…SNRSDPLKLT (85 aa)) constitute an Ig-like C2-type domain. A disulfide bridge connects residues C166 and C214. A helical membrane pass occupies residues 241 to 261 (ILIGVLVGSLLVAALVCFLLL). Residues 262-293 (RKTGRASDQSDFREQQPPASTPGHGPSDSSIS) are Cytoplasmic-facing. The interval 267–293 (ASDQSDFREQQPPASTPGHGPSDSSIS) is disordered.

It belongs to the immunoglobulin superfamily. CEA family.

The protein resides in the membrane. The polypeptide is Cell adhesion molecule CEACAM21 (Homo sapiens (Human)).